Reading from the N-terminus, the 145-residue chain is MPKIKTSGVKYPDGWELIEPTLSELHSKMREAENDPHDGRRKCEALWPIFKINHQRSRYLYDLYYNRKEISQELYEFCLDQGHADRNLIAKWKKQGYERLCCLRCIQTRDHNFATTCVCRVPKHLREEQVIECVHCGCKGCASGD.

It belongs to the BUD31 (G10) family.

The protein localises to the nucleus. The sequence is that of Protein BUD31 homolog 3 from Oryza sativa subsp. japonica (Rice).